Reading from the N-terminus, the 98-residue chain is Large ribosomal subunit protein uL23 (98 aa).

It belongs to the universal ribosomal protein uL23 family. Part of the 50S ribosomal subunit. Contacts protein L29, and trigger factor when it is bound to the ribosome.

Its function is as follows. One of the early assembly proteins it binds 23S rRNA. One of the proteins that surrounds the polypeptide exit tunnel on the outside of the ribosome. Forms the main docking site for trigger factor binding to the ribosome. The polypeptide is Large ribosomal subunit protein uL23 (Nitrosococcus oceani (strain ATCC 19707 / BCRC 17464 / JCM 30415 / NCIMB 11848 / C-107)).